A 431-amino-acid polypeptide reads, in one-letter code: MANSC domain-containing protein 1 (431 aa).

The signal sequence occupies residues 1–26 (MFFGGEGSLTYTLVIICFLTLRLSAS). At 27-385 (QNCLKKSLED…QYGLPFEKWL (359 aa)) the chain is on the extracellular side. The 85-residue stretch at 33 to 117 (SLEDVVIDIQ…LKPAKGLMSY (85 aa)) folds into the MANSC domain. N72, N222, and N251 each carry an N-linked (GlcNAc...) asparagine glycan. Positions 234–277 (SPHTTSATPKPATLLPTNASVTPSGTSQPQLATTAPPVTTVTSQ) are disordered. Polar residues predominate over residues 248-261 (LPTNASVTPSGTSQ). Low complexity predominate over residues 262–277 (PQLATTAPPVTTVTSQ). Residues N327 and N352 are each glycosylated (N-linked (GlcNAc...) asparagine). A disordered region spans residues 352–372 (NKTASWEGREASPGSSSQGSV). Residues 386–408 (LIGSLLFGVLFLVIGLVLLGRIL) traverse the membrane as a helical segment. The Cytoplasmic segment spans residues 409-431 (SESLRRKRYSRLDYLINGIYVDI).

Widely expressed.

Its subcellular location is the membrane. The chain is MANSC domain-containing protein 1 (MANSC1) from Homo sapiens (Human).